The chain runs to 553 residues: Arylsulfatase K (553 aa).

Positions 1 to 16 are cleaved as a signal peptide; that stretch reads MLLLLVSVVAALALAA. Ca(2+) contacts are provided by Asp-40 and Cys-80. Residue Cys-80 is the Nucleophile of the active site. Cys-80 is modified (3-oxoalanine (Cys)). The N-linked (GlcNAc...) asparagine glycan is linked to Asn-108. Lys-128 contributes to the substrate binding site. A glycan (N-linked (GlcNAc...) asparagine) is linked at Asn-191. His-249 is a substrate binding site. N-linked (GlcNAc...) asparagine glycosylation is present at Asn-260. The Ca(2+) site is built by Asp-311 and His-312. Residues Asn-373, Asn-411, and Asn-496 are each glycosylated (N-linked (GlcNAc...) asparagine). The segment at 530 to 553 is disordered; that stretch reads SPLASSPTQSTSGSQPTLPQSTSG. The segment covering 534 to 553 has biased composition (low complexity); the sequence is SSPTQSTSGSQPTLPQSTSG.

The protein belongs to the sulfatase family. Requires Ca(2+) as cofactor. Post-translationally, the conversion to 3-oxoalanine (also known as C-formylglycine, FGly), of a serine or cysteine residue in prokaryotes and of a cysteine residue in eukaryotes, is critical for catalytic activity. In terms of processing, the 75-kDa precursor undergoes proteolytic processing to yield a 23 kDa form. N-glycosylated with both high mannose and complex type sugars.

Its subcellular location is the secreted. It localises to the lysosome. The enzyme catalyses an aryl sulfate + H2O = a phenol + sulfate + H(+). The catalysed reaction is Hydrolysis of the 2-sulfate groups of the 2-O-sulfo-D-glucuronate residues of chondroitin sulfate, heparin and heparitin sulfate.. Functionally, catalyzes the hydrolysis of pseudosubstrates such as p-nitrocatechol sulfate and p-nitrophenyl sulfate. Catalyzes the hydrolysis of the 2-sulfate groups of the 2-O-sulfo-D-glucuronate residues of chondroitin sulfate, heparin and heparitin sulfate. Acts selectively on 2-sulfoglucuronate and lacks activity against 2-sulfoiduronate. This Mus musculus (Mouse) protein is Arylsulfatase K (Arsk).